A 159-amino-acid polypeptide reads, in one-letter code: uncharacterized protein (159 aa).

Positions 1-139 (MSRRAPGSRL…RKSQERSMSY (139 aa)) are disordered. A compositionally biased stretch (polar residues) spans 9-31 (RLSSGGTNYSRSWNDWQPRTDSA). The segment covering 65-82 (QRHDDTRVHADIQNDEKG) has biased composition (basic and acidic residues). A compositionally biased stretch (polar residues) spans 105–119 (RVNNVTSPEFTSVQH). Over residues 125-134 (ATKDMRKSQE) the composition is skewed to basic and acidic residues.

This is an uncharacterized protein from Homo sapiens (Human).